The following is a 371-amino-acid chain: Putative glutamate--cysteine ligase 2 (371 aa).

The protein belongs to the glutamate--cysteine ligase type 2 family. YbdK subfamily.

The catalysed reaction is L-cysteine + L-glutamate + ATP = gamma-L-glutamyl-L-cysteine + ADP + phosphate + H(+). Its function is as follows. ATP-dependent carboxylate-amine ligase which exhibits weak glutamate--cysteine ligase activity. The chain is Putative glutamate--cysteine ligase 2 from Paraburkholderia xenovorans (strain LB400).